The chain runs to 410 residues: Voltage-dependent chloride channel 1, chloroplastic (410 aa).

The Lumenal, thylakoid portion of the chain corresponds to 1–110 (MYQSMNLSVS…RHLLSSFSSR (110 aa)). Residues 111–131 (VILSLIPPVFFFTSVAVVIAS) traverse the membrane as a helical segment. Residues 132–147 (YNSAVALDWLPGIFPI) lie on the Stromal side of the membrane. Residues 148–168 (LRSSSLPYQLTAPALALLLVF) form a helical membrane-spanning segment. Topologically, residues 169–315 (RTEASYSRYE…PLSYTRLTSR (147 aa)) are lumenal, thylakoid. The next 2 membrane-spanning stretches (helical) occupy residues 316 to 336 (FLVF…HWIV) and 337 to 357 (VPAT…GVLI). Residues 358–410 (EEPFPMLALDELCDLVHSNIQEAVKSEKVIRNRIIAKIKLHEFKHSSNGRHRS) are Lumenal, thylakoid-facing.

This sequence belongs to the anion channel-forming bestrophin (TC 1.A.46) family. Voltage-dependent chloride channel subfamily. In terms of tissue distribution, mostly expressed in flowers and leaves and, to a lower extent, in stems and roots.

It localises to the plastid. Its subcellular location is the chloroplast thylakoid membrane. The enzyme catalyses chloride(in) = chloride(out). With respect to regulation, more active at positive than at negative voltages. Repressed by the general anion channel inhibitors dithiocyanatostilbene-2,20-disulphonic acid (DIDS) and niflumic acid. Its function is as follows. Voltage-dependent chloride (Cl) channel critical for proton motive force (PMF) partitioning across the thylakoid membrane by anion influx into the lumen during illumination, thus being required for photoprotection under fluctuating light conditions. Influences thylakoid ultrastructure, including lumen size and organization. During photosynthetic response on transition from dark to low light, involved in a sequential mechanism of adaptation; VCCN1 and CLCe first trigger the activation of photoprotection, which is later down-regulated by KEA3 to a low steady state, while adjusting electron transport. On transition from low to high light, accelerates the activation of photoprotection by building up a pH gradient across the thylakoid membrane. The chain is Voltage-dependent chloride channel 1, chloroplastic from Arabidopsis thaliana (Mouse-ear cress).